A 220-amino-acid polypeptide reads, in one-letter code: Peptidyl-tRNA hydrolase (220 aa).

Tyr14 lines the tRNA pocket. The active-site Proton acceptor is His19. Phe66, Asn68, and Asn114 together coordinate tRNA. A disordered region spans residues 184-220 (QAFNSTDLRPRPEPVPAPQPADVSGPQETGPAERPEV).

The protein belongs to the PTH family. In terms of assembly, monomer.

Its subcellular location is the cytoplasm. The catalysed reaction is an N-acyl-L-alpha-aminoacyl-tRNA + H2O = an N-acyl-L-amino acid + a tRNA + H(+). Hydrolyzes ribosome-free peptidyl-tRNAs (with 1 or more amino acids incorporated), which drop off the ribosome during protein synthesis, or as a result of ribosome stalling. In terms of biological role, catalyzes the release of premature peptidyl moieties from peptidyl-tRNA molecules trapped in stalled 50S ribosomal subunits, and thus maintains levels of free tRNAs and 50S ribosomes. The chain is Peptidyl-tRNA hydrolase from Deinococcus deserti (strain DSM 17065 / CIP 109153 / LMG 22923 / VCD115).